The chain runs to 543 residues: ABC transport system permease protein p69 (543 aa).

12 helical membrane passes run I18 to I38, A78 to W98, I115 to F135, A141 to F161, T211 to I231, L237 to F257, I288 to I308, I354 to L374, F379 to F399, I413 to F433, L482 to E502, and G510 to V530. The ABC transmembrane type-1 domain maps to L74–V256.

It belongs to the binding-protein-dependent transport system permease family.

It localises to the cell membrane. Functionally, probably part of a high-affinity transport system. In Mycoplasma genitalium (strain ATCC 33530 / DSM 19775 / NCTC 10195 / G37) (Mycoplasmoides genitalium), this protein is ABC transport system permease protein p69 (p69).